Consider the following 314-residue polypeptide: MDYGMYFFEHVTPYETLVRRMERVIASGKTPFQDYFLFESKGFGKVLILDKDVQSTERDEYIYHETLVHPAMLTHPEPKRVLIVGGGEGATLREVLKHPTVEKAVMVDIDGELVEVAKRHMPEWHQGAFDDPRAVLVIDDARAYLERTEERYDVVIIDLTDPVGEDNPARLLYTVEFYRLVKAHLNPGGVMGMQAGMILLTHHRVHPVVHRTVREAFRYVRSYKNHIPGFFLNFGFLLASDAFDPAAFSEGVIEARIRERNLALRHLTAPYLEAMFVLPKDLLEALEKETMVSTDQNPFYVTPEGEARQAPYKG.

The 238-residue stretch at 4 to 241 folds into the PABS domain; the sequence is GMYFFEHVTP…LNFGFLLASD (238 aa). Gln33 is an S-methyl-5'-thioadenosine binding site. His64 and Glu88 together coordinate spermidine. Residues Asp108 and 140–141 contribute to the S-methyl-5'-thioadenosine site; that span reads DA. Asp158 (proton acceptor) is an active-site residue. Pro168 provides a ligand contact to S-methyl-5'-thioadenosine.

This sequence belongs to the spermidine/spermine synthase family. Homodimer or homotetramer.

It localises to the cytoplasm. The enzyme catalyses S-adenosyl 3-(methylsulfanyl)propylamine + putrescine = S-methyl-5'-thioadenosine + spermidine + H(+). The protein operates within amine and polyamine biosynthesis; spermidine biosynthesis; spermidine from putrescine: step 1/1. Functionally, catalyzes the irreversible transfer of a propylamine group from the amino donor S-adenosylmethioninamine (decarboxy-AdoMet) to putrescine (1,4-diaminobutane) to yield spermidine. The protein is Polyamine aminopropyltransferase of Thermus thermophilus (strain ATCC BAA-163 / DSM 7039 / HB27).